The primary structure comprises 120 residues: Large ribosomal subunit protein bL20 (120 aa).

Belongs to the bacterial ribosomal protein bL20 family.

Functionally, binds directly to 23S ribosomal RNA and is necessary for the in vitro assembly process of the 50S ribosomal subunit. It is not involved in the protein synthesizing functions of that subunit. In Desulfitobacterium hafniense (strain DSM 10664 / DCB-2), this protein is Large ribosomal subunit protein bL20.